A 529-amino-acid polypeptide reads, in one-letter code: Bifunctional purine biosynthesis protein PurH (529 aa).

The MGS-like domain occupies 1-148 (MEQSFLPIRC…KNYKYVTVVV (148 aa)).

This sequence belongs to the PurH family.

The catalysed reaction is (6R)-10-formyltetrahydrofolate + 5-amino-1-(5-phospho-beta-D-ribosyl)imidazole-4-carboxamide = 5-formamido-1-(5-phospho-D-ribosyl)imidazole-4-carboxamide + (6S)-5,6,7,8-tetrahydrofolate. It catalyses the reaction IMP + H2O = 5-formamido-1-(5-phospho-D-ribosyl)imidazole-4-carboxamide. Its pathway is purine metabolism; IMP biosynthesis via de novo pathway; 5-formamido-1-(5-phospho-D-ribosyl)imidazole-4-carboxamide from 5-amino-1-(5-phospho-D-ribosyl)imidazole-4-carboxamide (10-formyl THF route): step 1/1. It functions in the pathway purine metabolism; IMP biosynthesis via de novo pathway; IMP from 5-formamido-1-(5-phospho-D-ribosyl)imidazole-4-carboxamide: step 1/1. The chain is Bifunctional purine biosynthesis protein PurH from Wigglesworthia glossinidia brevipalpis.